A 126-amino-acid polypeptide reads, in one-letter code: E3 ubiquitin-protein ligase PPP1R11 (126 aa).

The disordered stretch occupies residues 1–25; sequence MAEAGAGLSETVTETTVTVTTEPEN. Position 2 is an N-acetylalanine (Ala-2). A compositionally biased stretch (low complexity) spans 10–22; the sequence is ETVTETTVTVTTE. An atypical RING finger domain 1 region spans residues 52 to 62; sequence HMGRRSSKCCC. The segment at 70-126 is disordered; the sequence is FGESSTESDEEEEEGCGHTHCVRGHRKGRRRATLGPTPTTPPQPPDPSQPPPGPMQH. Phosphoserine is present on residues Ser-73 and Ser-74. Position 75 is a phosphothreonine (Thr-75). The residue at position 77 (Ser-77) is a Phosphoserine. The segment at 85 to 94 is atypical RING finger domain 2; the sequence is CGHTHCVRGH. A compositionally biased stretch (basic residues) spans 89–101; it reads HCVRGHRKGRRRA. A compositionally biased stretch (pro residues) spans 107-126; it reads PTTPPQPPDPSQPPPGPMQH. Phosphothreonine is present on Thr-109.

Interacts with TLR2 and UBE2D2. Post-translationally, auto-ubiquitinated. In terms of tissue distribution, widely expressed.

The enzyme catalyses S-ubiquitinyl-[E2 ubiquitin-conjugating enzyme]-L-cysteine + [acceptor protein]-L-lysine = [E2 ubiquitin-conjugating enzyme]-L-cysteine + N(6)-ubiquitinyl-[acceptor protein]-L-lysine.. The protein operates within protein modification; protein ubiquitination. Its function is as follows. Atypical E3 ubiquitin-protein ligase which ubiquitinates TLR2 at 'Lys-754' leading to its degradation by the proteasome. Plays a role in regulating inflammatory cytokine release and gram-positive bacterial clearance by functioning, in part, through the ubiquitination and degradation of TLR2. Inhibitor of protein phosphatase 1. The sequence is that of E3 ubiquitin-protein ligase PPP1R11 (PPP1R11) from Homo sapiens (Human).